The primary structure comprises 262 residues: uncharacterized protein (262 aa).

It belongs to the glycosyltransferase 2 family.

This is an uncharacterized protein from Mycobacterium tuberculosis (strain CDC 1551 / Oshkosh).